A 2291-amino-acid polypeptide reads, in one-letter code: Protein Ycf2 A (2291 aa).

1642-1649 is an ATP binding site; that stretch reads GSIGTGRS.

Belongs to the Ycf2 family.

The protein localises to the plastid. The protein resides in the chloroplast stroma. Its function is as follows. Probable ATPase of unknown function. Its presence in a non-photosynthetic plant (Epifagus virginiana) and experiments in tobacco indicate that it has an essential function which is probably not related to photosynthesis. This chain is Protein Ycf2 A (ycf2-A), found in Atropa belladonna (Belladonna).